We begin with the raw amino-acid sequence, 537 residues long: Bifunctional purine biosynthesis protein PurH (537 aa).

An MGS-like domain is found at 8–158 (IPAPDLVPVR…KNHAYVAVVT (151 aa)).

It belongs to the PurH family.

It carries out the reaction (6R)-10-formyltetrahydrofolate + 5-amino-1-(5-phospho-beta-D-ribosyl)imidazole-4-carboxamide = 5-formamido-1-(5-phospho-D-ribosyl)imidazole-4-carboxamide + (6S)-5,6,7,8-tetrahydrofolate. It catalyses the reaction IMP + H2O = 5-formamido-1-(5-phospho-D-ribosyl)imidazole-4-carboxamide. Its pathway is purine metabolism; IMP biosynthesis via de novo pathway; 5-formamido-1-(5-phospho-D-ribosyl)imidazole-4-carboxamide from 5-amino-1-(5-phospho-D-ribosyl)imidazole-4-carboxamide (10-formyl THF route): step 1/1. The protein operates within purine metabolism; IMP biosynthesis via de novo pathway; IMP from 5-formamido-1-(5-phospho-D-ribosyl)imidazole-4-carboxamide: step 1/1. In Chelativorans sp. (strain BNC1), this protein is Bifunctional purine biosynthesis protein PurH.